A 143-amino-acid chain; its full sequence is Large-conductance mechanosensitive channel (143 aa).

2 helical membrane passes run 10 to 30 and 89 to 109; these read FAVK…GAFS and GSFI…FLMV.

This sequence belongs to the MscL family. As to quaternary structure, homopentamer.

It is found in the cell inner membrane. Functionally, channel that opens in response to stretch forces in the membrane lipid bilayer. May participate in the regulation of osmotic pressure changes within the cell. The sequence is that of Large-conductance mechanosensitive channel from Burkholderia ambifaria (strain ATCC BAA-244 / DSM 16087 / CCUG 44356 / LMG 19182 / AMMD) (Burkholderia cepacia (strain AMMD)).